Reading from the N-terminus, the 478-residue chain is MREPLLQLIVLSLIIIVVNTQFESGRLCFCKGFEAVEPCDCSKPQTIDKLNNHRIYEKVQKLLKKDFFRFYKVNMDKTCPFWADDRQCGTNQCGIAFCDDEVPAGLRRRNAVNMEAAAVKEEEDDDAEKCADAGNNIDPMDRTLHDDEKRQLDAMDHHDDGLEDKFCEIEDDESDGMHYVDLSKNPERYTGYAGKSPQRVWKSIYEENCFKPDPKFDKNFLTNPSNFGMCLEKRVFYRLISGLHSAITISIAAYNYKPPPPSLGQFGSQMGTWFRNTEMFAGRFGTKWSWEGPQRLRNVYFIYLLELRALLKAAPYLQNELFYTGNDVEDAETRKAVEDLLEEIRAYPNHFDESEMFTGVESHARALREEFRSHFVNISRIMDCVECDKCRLWGKVQTHGMGTALKILFSDLPHSHYKQDSSKFQLTRNEVVALLQSFGRYSSSILEVDNFREDMYPGESVMNTAADGPPRKSNKIDL.

Positions 1–20 (MREPLLQLIVLSLIIIVVNT) are cleaved as a signal peptide. Cystine bridges form between cysteine 28/cysteine 41, cysteine 30/cysteine 39, cysteine 79/cysteine 384, cysteine 88/cysteine 93, cysteine 209/cysteine 230, and cysteine 387/cysteine 390. The segment at 117 to 143 (AAVKEEEDDDAEKCADAGNNIDPMDRT) is disordered. Arginine 188, threonine 190, and tryptophan 201 together coordinate FAD. The FAD site is built by serine 241, histidine 244, arginine 283, and arginine 295. An N-linked (GlcNAc...) asparagine glycan is attached at asparagine 377. Residues 459 to 478 (ESVMNTAADGPPRKSNKIDL) are disordered.

It belongs to the EROs family. May function both as a monomer and a homodimer. The cofactor is FAD.

It is found in the endoplasmic reticulum membrane. In terms of biological role, oxidoreductase involved in disulfide bond formation in the endoplasmic reticulum. Efficiently reoxidizes pdi-1, the enzyme catalyzing protein disulfide formation, in order to allow pdi-1 to sustain additional rounds of disulfide formation. Following pdi reoxidation, passes its electrons to molecular oxygen via FAD, leading to the production of reactive oxygen species (ROS) in the cell. This is Endoplasmic reticulum oxidoreductin-1 (ero-1) from Caenorhabditis elegans.